Consider the following 561-residue polypeptide: 7-keto 8-aminopelargonic acid transporter (561 aa).

Over 1-49 (MNRVGAVFLFVYERNFFLSIVPDRHRTEIRMSSSERSEVKFDKHFNWWS) the chain is Cytoplasmic. A helical transmembrane segment spans residues 50-70 (LLGIAFSLSCSWVGISASMAV). Topologically, residues 71 to 77 (GIASGGP) are extracellular. The helical transmembrane segment at 78 to 98 (LLIIYGLIIAAFFSLMCGISL) threads the bilayer. The Cytoplasmic segment spans residues 99-160 (GDFAAILPNS…NVEVSSKFQK (62 aa)). The chain crosses the membrane as a helical span at residues 161–181 (VSSMVVGLLNYFGAIFTTASI). Residues 182–204 (CSSLSMSCIGIHKLLHPDYELKH) are Extracellular-facing. The helical transmembrane segment at 205–225 (WHVFVGYECINAVLTLFNIYS) threads the bilayer. Over 226 to 230 (TPLPY) the chain is Cytoplasmic. The chain crosses the membrane as a helical span at residues 231–251 (ISQFGLYTSLLSFAMTFIICI). Over 252–281 (VSRSDNTVDPWPKASNIFGSFDNQTGWNSS) the chain is Extracellular. A helical transmembrane segment spans residues 282–302 (GMAFVVGLVNPIWAFVGIDSA). The Cytoplasmic portion of the chain corresponds to 303 to 321 (THMIDEVGYSKSRFLVPKV). The helical transmembrane segment at 322–342 (IITTIIVGFVTSFIYCVGLFF) threads the bilayer. The Extracellular portion of the chain corresponds to 343 to 369 (CITDQTAVVESILPIVEIFYQATGNRN). A helical transmembrane segment spans residues 370 to 390 (LSVFLQCMCITTGFVSGIASG). Over 391–439 (TWQSRILQSFGKSYAPFYKEGSLGNKSLKKLAVLTPGFKSPLYAHFLSQ) the chain is Cytoplasmic. A helical membrane pass occupies residues 440–460 (ICVTIIGCIFMGSSTAFNAII). Position 461 (Thr-461) is a topological domain, extracellular. The chain crosses the membrane as a helical span at residues 462-482 (ACITLLLMSYAVPSFIFLFVI). The Cytoplasmic segment spans residues 483 to 507 (KKEKFIHRIESDVNCVSRPNRRRMS). A helical membrane pass occupies residues 508 to 528 (MIPHIICILWTLFCLVFLSFP). Residues 529-540 (YTLPVTAGNMNY) lie on the Extracellular side of the membrane. A helical membrane pass occupies residues 541 to 560 (TSVVYAVVFCIISIVVFPTC). A topological domain (cytoplasmic) is located at residue Ile-561.

It belongs to the amino acid-polyamine-organocation (APC) superfamily.

The protein resides in the membrane. Its function is as follows. Transport into the cell of 7-keto 8-aminopelargonic acid. This Saccharomyces cerevisiae (strain ATCC 204508 / S288c) (Baker's yeast) protein is 7-keto 8-aminopelargonic acid transporter (BIO5).